We begin with the raw amino-acid sequence, 254 residues long: Imidazole glycerol phosphate synthase subunit HisF (254 aa).

Active-site residues include D11 and D130.

Belongs to the HisA/HisF family. In terms of assembly, heterodimer of HisH and HisF.

The protein localises to the cytoplasm. It catalyses the reaction 5-[(5-phospho-1-deoxy-D-ribulos-1-ylimino)methylamino]-1-(5-phospho-beta-D-ribosyl)imidazole-4-carboxamide + L-glutamine = D-erythro-1-(imidazol-4-yl)glycerol 3-phosphate + 5-amino-1-(5-phospho-beta-D-ribosyl)imidazole-4-carboxamide + L-glutamate + H(+). Its pathway is amino-acid biosynthesis; L-histidine biosynthesis; L-histidine from 5-phospho-alpha-D-ribose 1-diphosphate: step 5/9. IGPS catalyzes the conversion of PRFAR and glutamine to IGP, AICAR and glutamate. The HisF subunit catalyzes the cyclization activity that produces IGP and AICAR from PRFAR using the ammonia provided by the HisH subunit. The sequence is that of Imidazole glycerol phosphate synthase subunit HisF from Oceanobacillus iheyensis (strain DSM 14371 / CIP 107618 / JCM 11309 / KCTC 3954 / HTE831).